An 813-amino-acid chain; its full sequence is Phosphate transporter PHO1 homolog 3 (813 aa).

An SPX domain is found at Met1–Lys359. The Cytoplasmic segment spans residues Met1–Thr411. The interval Glu214–Ser266 is disordered. A compositionally biased stretch (acidic residues) spans Met230–Asn241. The chain crosses the membrane as a helical span at residues Phe412–Ile432. Topologically, residues Arg433–Met450 are extracellular. A helical transmembrane segment spans residues Phe451–Ile471. The Cytoplasmic portion of the chain corresponds to Tyr472–Arg496. Residues Gln497–Leu517 form a helical membrane-spanning segment. Residues Asp518–Glu533 are Extracellular-facing. A helical membrane pass occupies residues Ile534–Phe554. The Cytoplasmic portion of the chain corresponds to Tyr555–Arg684. Residues Lys618–Asn813 form the EXS domain. The helical transmembrane segment at Val685–His705 threads the bilayer. Over Asp706 to Lys729 the chain is Extracellular. Residues Val730–Leu750 form a helical membrane-spanning segment. The Cytoplasmic segment spans residues Asp751–Asn813.

Belongs to the SYG1 (TC 2.A.94) family. Expressed in vascular cylinder of roots, leaves and filaments. Expressed in receptacle and stigma apex.

Its subcellular location is the cell membrane. May transport inorganic phosphate (Pi). The chain is Phosphate transporter PHO1 homolog 3 (PHO1;H3) from Arabidopsis thaliana (Mouse-ear cress).